The sequence spans 753 residues: Pesticidal crystal protein Cry20Aa (753 aa).

The span at 680–696 (DTTYQPSYDNYNQNASG) shows a compositional bias: polar residues. The disordered stretch occupies residues 680-721 (DTTYQPSYDNYNQNASGTYDDGYNPNASDSYDQSYTNNYSQN). The segment covering 712–721 (QSYTNNYSQN) has biased composition (low complexity).

It belongs to the delta endotoxin family. In terms of processing, has low mosquitocidal activity probably due to rapid proteolysis to inactive 56 kDa and 43 kDa proteins.

In terms of biological role, promotes colloidosmotic lysis by binding to the midgut epithelial cells of mosquitos. Active against Aedes aegypti and Culex quinquefasciatus larvae. This Bacillus thuringiensis subsp. fukuokaensis protein is Pesticidal crystal protein Cry20Aa (cry20Aa).